Here is a 73-residue protein sequence, read N- to C-terminus: DNA gyrase inhibitor YacG (73 aa).

Zn(2+) contacts are provided by Cys12, Cys15, Cys31, and Cys35. Residues 47–73 (DYAIPGEPIDPAEPSEDRNGAEGPPTD) form a disordered region.

The protein belongs to the DNA gyrase inhibitor YacG family. In terms of assembly, interacts with GyrB. The cofactor is Zn(2+).

In terms of biological role, inhibits all the catalytic activities of DNA gyrase by preventing its interaction with DNA. Acts by binding directly to the C-terminal domain of GyrB, which probably disrupts DNA binding by the gyrase. The sequence is that of DNA gyrase inhibitor YacG from Methylococcus capsulatus (strain ATCC 33009 / NCIMB 11132 / Bath).